A 495-amino-acid chain; its full sequence is Probable staphylococcal-like nuclease CAN4 (495 aa).

The N-myristoyl glycine moiety is linked to residue glycine 2. A lipid anchor (S-palmitoyl cysteine) is attached at cysteine 11. Disordered stretches follow at residues aspartate 45–leucine 68 and leucine 81–proline 101. Positions leucine 50–proline 66 are enriched in pro residues. A TNase-like domain is found at lysine 297 to tyrosine 470. Ca(2+) is bound at residue aspartate 310. The active site involves arginine 377. Aspartate 382 lines the Ca(2+) pocket. Active-site residues include glutamate 385 and arginine 419.

This sequence belongs to the thermonuclease family. Requires Ca(2+) as cofactor.

It is found in the cell membrane. Enzyme that catalyzes the hydrolysis of both DNA and RNA at the 5' position of the phosphodiester bond. The polypeptide is Probable staphylococcal-like nuclease CAN4 (Oryza sativa subsp. japonica (Rice)).